The following is a 1531-amino-acid chain: Slit homolog 1 protein (1531 aa).

The N-terminal stretch at 1–33 is a signal peptide; the sequence is MALTPQRGSSSGLSRPELWLLLWAAAWRLGATA. One can recognise an LRRNT domain in the interval 34 to 61; sequence CPALCTCTGTTVDCHGTGLQAIPKNIPR. LRR repeat units follow at residues 62 to 83, 86 to 107, 110 to 131, 134 to 155, 158 to 179, and 182 to 203; these read NTER…DFAG, QLRV…AFDD, ELER…LFQN, ALSR…AFRG, DLKN…AFRA, and GLEV…SFNH. Asparagine 72 carries N-linked (GlcNAc...) asparagine glycosylation. N-linked (GlcNAc...) asparagine glycosylation is present at asparagine 192. Positions 215-265 constitute an LRRCT 1 domain; it reads NHLFCDCHLAWLSQWLRQRPTIGLFTQCSGPASLRGLNVAEVQKSEFSCSG. Residues 273–309 form the LRRNT 2 domain; sequence PACTLSSGSCPAMCSCSNGIVDCRGKGLTAIPANLPE. A disulfide bridge links cysteine 286 with cysteine 295. LRR repeat units follow at residues 310–331, 334–355, 358–379, 382–403, and 406–427; these read TMTE…AFSP, KLRR…AFQG, SLNS…VFGG, TLQL…AFQD, and NLSL…TFTS. An N-linked (GlcNAc...) asparagine glycan is attached at asparagine 406. One can recognise an LRRCT 2 domain in the interval 439 to 489; it reads NPFICDCNLKWLADFLRTNPIETTGARCASPRRLANKRIGQIKSKKFRCSA. 4 disulfide bridges follow: cysteine 443–cysteine 466, cysteine 445–cysteine 487, cysteine 513–cysteine 519, and cysteine 517–cysteine 526. One can recognise an LRRNT 3 domain in the interval 504–540; that stretch reads NSECTSDVACPHKCRCEASVVECSGLKLSKIPERIPQ. LRR repeat units lie at residues 541-562, 566-587, 590-611, 614-635, and 638-659; these read STTE…GLFK, HLKK…TFEG, SVSE…MFRG, GLRT…SFTG, and NVRL…AFDT. An N-linked (GlcNAc...) asparagine glycan is attached at asparagine 571. Residue asparagine 630 is glycosylated (N-linked (GlcNAc...) asparagine). The LRRCT 3 domain maps to 671 to 721; that stretch reads NPFNCNCQLAWLGDWLRKRKIVTGNPRCQNPDFLRQIPLQDVAFPDFRCEE. Cystine bridges form between cysteine 675–cysteine 698 and cysteine 677–cysteine 719. Residues 725 to 761 enclose the LRRNT 4 domain; it reads EVGCLPRPQCPQECACLDTVVRCSNKHLQALPKGIPK. 3 N-linked (GlcNAc...) asparagine glycosylation sites follow: asparagine 762, asparagine 801, and asparagine 806. 4 LRR repeats span residues 762 to 783, 785 to 806, 809 to 830, and 833 to 854; these read NVTE…LSTF, YLQL…SFTN, QLTT…AFQG, and SLRL…IFAD. An LRRCT 4 domain is found at 866–916; it reads NPLYCDCHLRWLSSWVKTGYKEPGIARCAGPPEMEGKLLLTTPAKKFECQG. 6 EGF-like domains span residues 927-962, 964-1003, 1005-1041, 1043-1081, 1083-1119, and 1124-1160; these read DPCL…RNCE, SLDS…LTCG, NTDD…RACE, LVDF…DNCS, NQDD…QLCE, and PRNS…PECE. 18 cysteine pairs are disulfide-bonded: cysteine 929/cysteine 940, cysteine 934/cysteine 950, cysteine 952/cysteine 961, cysteine 968/cysteine 979, cysteine 973/cysteine 991, cysteine 993/cysteine 1002, cysteine 1009/cysteine 1020, cysteine 1014/cysteine 1029, cysteine 1031/cysteine 1040, cysteine 1047/cysteine 1060, cysteine 1054/cysteine 1069, cysteine 1071/cysteine 1080, cysteine 1087/cysteine 1098, cysteine 1092/cysteine 1107, cysteine 1109/cysteine 1118, cysteine 1128/cysteine 1139, cysteine 1133/cysteine 1148, and cysteine 1150/cysteine 1159. An N-linked (GlcNAc...) asparagine glycan is attached at asparagine 1026. Asparagine 1079 carries an N-linked (GlcNAc...) asparagine glycan. The Laminin G-like domain maps to 1163 to 1336; it reads LSVNFVDRDT…QMKPGVVPGC (174 aa). N-linked (GlcNAc...) asparagine glycans are attached at residues asparagine 1186, asparagine 1256, and asparagine 1303. Intrachain disulfides connect cysteine 1310–cysteine 1336, cysteine 1339–cysteine 1349, cysteine 1344–cysteine 1359, cysteine 1361–cysteine 1370, cysteine 1378–cysteine 1388, cysteine 1383–cysteine 1398, cysteine 1400–cysteine 1409, cysteine 1419–cysteine 1429, cysteine 1424–cysteine 1439, cysteine 1441–cysteine 1450, cysteine 1456–cysteine 1495, cysteine 1474–cysteine 1509, cysteine 1485–cysteine 1525, and cysteine 1489–cysteine 1527. EGF-like domains follow at residues 1337-1371, 1374-1410, and 1415-1451; these read EPCR…LHCD, VDGP…ALCN, and VAEP…ELCE. Residues 1456-1531 form the CTCK domain; that stretch reads CRGDPVRDFH…PTKCGCAPCA (76 aa).

Interacts with ROBO1 and GREM1. In terms of tissue distribution, in adult brains expressed in the hippocampus, cerebral cortex, and olfactory bulb but not in the cerebellum. In embryo expressed in cerebral cortex.

It is found in the secreted. Functionally, thought to act as molecular guidance cue in cellular migration, and function appears to be mediated by interaction with roundabout homolog receptors. During neural development involved in axonal navigation at the ventral midline of the neural tube and projection of axons to different regions. SLIT1 and SLIT2 together seem to be essential for midline guidance in the forebrain by acting as repulsive signal preventing inappropriate midline crossing by axons projecting from the olfactory bulb. This chain is Slit homolog 1 protein (Slit1), found in Rattus norvegicus (Rat).